The chain runs to 525 residues: GMP synthase [glutamine-hydrolyzing] (525 aa).

The Glutamine amidotransferase type-1 domain maps to 8–207 (KILILDFGSQ…ALDICECEAN (200 aa)). Cys85 acts as the Nucleophile in catalysis. Catalysis depends on residues His181 and Glu183. In terms of domain architecture, GMPS ATP-PPase spans 208–400 (WKPTSIIEDA…LGLPYDMLYR (193 aa)). 235–241 (SGGVDSS) is a binding site for ATP.

In terms of assembly, homodimer.

It carries out the reaction XMP + L-glutamine + ATP + H2O = GMP + L-glutamate + AMP + diphosphate + 2 H(+). The protein operates within purine metabolism; GMP biosynthesis; GMP from XMP (L-Gln route): step 1/1. Its function is as follows. Catalyzes the synthesis of GMP from XMP. This is GMP synthase [glutamine-hydrolyzing] from Shewanella sediminis (strain HAW-EB3).